The sequence spans 340 residues: Coproporphyrin III ferrochelatase (340 aa).

Positions 52 and 121 each coordinate Fe-coproporphyrin III. Positions 177 and 260 each coordinate Fe(2+).

The protein belongs to the ferrochelatase family.

It is found in the cytoplasm. It carries out the reaction Fe-coproporphyrin III + 2 H(+) = coproporphyrin III + Fe(2+). It participates in porphyrin-containing compound metabolism; protoheme biosynthesis. Involved in coproporphyrin-dependent heme b biosynthesis. Catalyzes the insertion of ferrous iron into coproporphyrin III to form Fe-coproporphyrin III. In Mycobacteroides abscessus (strain ATCC 19977 / DSM 44196 / CCUG 20993 / CIP 104536 / JCM 13569 / NCTC 13031 / TMC 1543 / L948) (Mycobacterium abscessus), this protein is Coproporphyrin III ferrochelatase.